The chain runs to 490 residues: Betaine aldehyde dehydrogenase (490 aa).

K(+) is bound by residues Thr26, Ile27, and Asp93. Position 150–152 (150–152 (GAW)) interacts with NAD(+). The active-site Charge relay system is Lys162. 176 to 179 (KPSE) contacts NAD(+). Val180 is a K(+) binding site. 230–233 (GVAS) contributes to the NAD(+) binding site. Leu246 contributes to the K(+) binding site. Glu252 functions as the Proton acceptor in the catalytic mechanism. 3 residues coordinate NAD(+): Gly254, Cys286, and Glu387. Cys286 functions as the Nucleophile in the catalytic mechanism. Cysteine sulfenic acid (-SOH) is present on Cys286. The K(+) site is built by Lys457 and Gly460. The active-site Charge relay system is Glu464.

This sequence belongs to the aldehyde dehydrogenase family. In terms of assembly, dimer of dimers. K(+) serves as cofactor.

The enzyme catalyses betaine aldehyde + NAD(+) + H2O = glycine betaine + NADH + 2 H(+). It participates in amine and polyamine biosynthesis; betaine biosynthesis via choline pathway; betaine from betaine aldehyde: step 1/1. Functionally, involved in the biosynthesis of the osmoprotectant glycine betaine. Catalyzes the irreversible oxidation of betaine aldehyde to the corresponding acid. The chain is Betaine aldehyde dehydrogenase from Escherichia coli O6:K15:H31 (strain 536 / UPEC).